Reading from the N-terminus, the 234-residue chain is Phosphoribosylaminoimidazole-succinocarboxamide synthase (234 aa).

It belongs to the SAICAR synthetase family.

It catalyses the reaction 5-amino-1-(5-phospho-D-ribosyl)imidazole-4-carboxylate + L-aspartate + ATP = (2S)-2-[5-amino-1-(5-phospho-beta-D-ribosyl)imidazole-4-carboxamido]succinate + ADP + phosphate + 2 H(+). Its pathway is purine metabolism; IMP biosynthesis via de novo pathway; 5-amino-1-(5-phospho-D-ribosyl)imidazole-4-carboxamide from 5-amino-1-(5-phospho-D-ribosyl)imidazole-4-carboxylate: step 1/2. This Pyrococcus abyssi (strain GE5 / Orsay) protein is Phosphoribosylaminoimidazole-succinocarboxamide synthase (purC).